The primary structure comprises 485 residues: Glutamate--tRNA ligase (485 aa).

The short motif at 11 to 21 (PSPTGHLHIGN) is the 'HIGH' region element. Residues 252–256 (KLSKR) carry the 'KMSKS' region motif. Residue K255 coordinates ATP.

The protein belongs to the class-I aminoacyl-tRNA synthetase family. Glutamate--tRNA ligase type 1 subfamily. As to quaternary structure, monomer.

It is found in the cytoplasm. The enzyme catalyses tRNA(Glu) + L-glutamate + ATP = L-glutamyl-tRNA(Glu) + AMP + diphosphate. Catalyzes the attachment of glutamate to tRNA(Glu) in a two-step reaction: glutamate is first activated by ATP to form Glu-AMP and then transferred to the acceptor end of tRNA(Glu). The chain is Glutamate--tRNA ligase from Bacillus thuringiensis (strain Al Hakam).